Here is a 200-residue protein sequence, read N- to C-terminus: Charged multivesicular body protein 6-A (200 aa).

Residue glycine 2 is the site of N-myristoyl glycine attachment. The stretch at 9-102 forms a coiled coil; that stretch reads RRSRVTEQDK…FAQIEMKVIE (94 aa). The tract at residues 166 to 200 is disordered; that stretch reads EDLELPEAPSEPLPDTIPEKQAVKNKPKPQMIAAS. Positions 168-179 match the Type-2 MIT-interacting motif motif; the sequence is LELPEAPSEPLP.

The protein belongs to the SNF7 family. In terms of assembly, probable core component of the endosomal sorting required for transport complex III (ESCRT-III). ESCRT-III components are thought to multimerize to form a flat lattice on the perimeter membrane of the endosome.

It localises to the endomembrane system. It is found in the late endosome membrane. Its function is as follows. Probable core component of the endosomal sorting required for transport complex III (ESCRT-III) which is involved in multivesicular bodies (MVBs) formation and sorting of endosomal cargo proteins into MVBs. MVBs contain intraluminal vesicles (ILVs) that are generated by invagination and scission from the limiting membrane of the endosome and mostly are delivered to lysosomes enabling degradation of membrane proteins, such as stimulated growth factor receptors, lysosomal enzymes and lipids. In the ESCRT-III complex, it probably serves as an acceptor for the ESCRT-II complex on endosomal membranes. The sequence is that of Charged multivesicular body protein 6-A (chmp6-a) from Xenopus laevis (African clawed frog).